The following is a 530-amino-acid chain: Plexin domain-containing protein 2 (530 aa).

Positions 1 to 30 (MARFRRADLAAAGVMLLCHFLTDRFQFAHG) are cleaved as a signal peptide. Residues 31 to 455 (EPGHHTNDWI…AEKKGGTLHA (425 aa)) lie on the Extracellular side of the membrane. N103 and N160 each carry an N-linked (GlcNAc...) asparagine glycan. The PSI domain maps to 327-372 (TCLQFNGCGPCVSSQIGFNCSWCSKLQRCSSGFDRHRQDWVDSGCP). Over residues 378 to 387 (KEKMCEKTEP) the composition is skewed to basic and acidic residues. The segment at 378-399 (KEKMCEKTEPGETSQTTTTSHT) is disordered. Over residues 390-399 (TSQTTTTSHT) the composition is skewed to low complexity. Residues 456-476 (GLIVGILILVLIIAAAILVTV) form a helical membrane-spanning segment. The Cytoplasmic segment spans residues 477–530 (YMYHHPTSAASIFFIERRPSRWPAMKFRRGSGHPAYAEVEPVGEKEGFIVSEQC). The residue at position 507 (S507) is a Phosphoserine.

Belongs to the plexin family. As to quaternary structure, interacts with CTTN. As to expression, expressed in tumor endothelium and in vessels of some normal tissues, such as the muscle and lung.

The protein localises to the membrane. May play a role in tumor angiogenesis. In Mus musculus (Mouse), this protein is Plexin domain-containing protein 2 (Plxdc2).